A 673-amino-acid polypeptide reads, in one-letter code: Metal-nicotianamine transporter YSL1 (673 aa).

Residues 1–13 (MEIEQRRIMKREG) show a composition bias toward basic and acidic residues. Positions 1 to 39 (MEIEQRRIMKREGEEEEDNNQLSLQEEEPDTEEEMSGRT) are disordered. Over residues 14 to 34 (EEEEDNNQLSLQEEEPDTEEE) the composition is skewed to acidic residues. Helical transmembrane passes span 46–66 (QITV…SVIA), 71–91 (LTTG…FVFV), 119–139 (SAVA…LLGL), 163–183 (GLGW…FVLI), 225–245 (FMKY…FSGI), 260–280 (AWKQ…GMIC), 283–303 (LVNL…WPLL), 328–348 (VFLS…KILF), 392–412 (FAVS…PLIF), 420–440 (VIVA…GAGL), 442–462 (DINM…AVTG), 467–487 (VVAG…SCIL), 510–530 (IGTV…YKAF), 558–578 (FSAL…FAVL), 604–624 (FLVG…VFVW), and 642–662 (GLIC…LAGV).

This sequence belongs to the YSL (TC 2.A.67.2) family. In terms of tissue distribution, low levels of expression in leaves and shoots, but not detected in roots. Restricted to the vasculature, in the xylem parenchyma surrounding xylem tubes. Expressed in pollen grains, in the vasculature of petals and sepals, in the carpel veins, in the style underneath the stigmatic papillae, in the vascular tissue of the funiculus and in the chalazal endosperm.

Its subcellular location is the membrane. Involved in iron loading of the seeds. Acts probably as a transporter of iron- and metal-nicotianamine chelates. This chain is Metal-nicotianamine transporter YSL1 (YSL1), found in Arabidopsis thaliana (Mouse-ear cress).